We begin with the raw amino-acid sequence, 238 residues long: Large ribosomal subunit protein uL2 (238 aa).

The disordered stretch occupies residues 199-238; that stretch reads PHGGGLHQSVSRSSTVARNTPPGRKVGHIAARRTGRRDRK. The segment covering 206-216 has biased composition (polar residues); the sequence is QSVSRSSTVAR. Residues 223–238 show a composition bias toward basic residues; sequence KVGHIAARRTGRRDRK.

The protein belongs to the universal ribosomal protein uL2 family. In terms of assembly, part of the 50S ribosomal subunit. Forms a bridge to the 30S subunit in the 70S ribosome.

Its function is as follows. One of the primary rRNA binding proteins. Required for association of the 30S and 50S subunits to form the 70S ribosome, for tRNA binding and peptide bond formation. It has been suggested to have peptidyltransferase activity; this is somewhat controversial. Makes several contacts with the 16S rRNA in the 70S ribosome. The chain is Large ribosomal subunit protein uL2 from Metallosphaera sedula (strain ATCC 51363 / DSM 5348 / JCM 9185 / NBRC 15509 / TH2).